The sequence spans 500 residues: uncharacterized protein (500 aa).

Residues 27–47 (IFALILIVFGFIIAPLLPGIF) traverse the membrane as a helical segment.

Its subcellular location is the membrane. This is an uncharacterized protein from Borreliella burgdorferi (strain ATCC 35210 / DSM 4680 / CIP 102532 / B31) (Borrelia burgdorferi).